A 98-amino-acid polypeptide reads, in one-letter code: Small ribosomal subunit protein bS18 (98 aa).

It belongs to the bacterial ribosomal protein bS18 family. In terms of assembly, part of the 30S ribosomal subunit. Forms a tight heterodimer with protein bS6.

Binds as a heterodimer with protein bS6 to the central domain of the 16S rRNA, where it helps stabilize the platform of the 30S subunit. In Flavobacterium johnsoniae (strain ATCC 17061 / DSM 2064 / JCM 8514 / BCRC 14874 / CCUG 350202 / NBRC 14942 / NCIMB 11054 / UW101) (Cytophaga johnsonae), this protein is Small ribosomal subunit protein bS18.